The following is a 467-amino-acid chain: UDP-glycosyltransferase 71D2 (467 aa).

UDP-alpha-D-glucose is bound by residues Ser-283, Ser-339 to Gln-341, His-356 to Glu-364, and Tyr-378 to Gln-381.

Belongs to the UDP-glycosyltransferase family.

The protein is UDP-glycosyltransferase 71D2 (UGT71D2) of Arabidopsis thaliana (Mouse-ear cress).